The chain runs to 237 residues: Sugar fermentation stimulation protein homolog (237 aa).

Belongs to the SfsA family.

This Pseudomonas putida (strain GB-1) protein is Sugar fermentation stimulation protein homolog.